The following is a 32-amino-acid chain: Cytochrome b6-f complex subunit 7 (32 aa).

A helical transmembrane segment spans residues 9–27 (AAVFWVLIPVGLLGGVLLL).

The protein belongs to the PetM family. In terms of assembly, the 4 large subunits of the cytochrome b6-f complex are cytochrome b6, subunit IV (17 kDa polypeptide, PetD), cytochrome f and the Rieske protein, while the 4 small subunits are PetG, PetL, PetM and PetN. The complex functions as a dimer.

It localises to the cellular thylakoid membrane. Its function is as follows. Component of the cytochrome b6-f complex, which mediates electron transfer between photosystem II (PSII) and photosystem I (PSI), cyclic electron flow around PSI, and state transitions. The polypeptide is Cytochrome b6-f complex subunit 7 (Prochlorococcus marinus (strain NATL1A)).